The primary structure comprises 427 residues: NAD kinase 2, mitochondrial (427 aa).

Residues 1-33 (MSLCLRLLCSVCGAAALRVPLGVSSLRALSGSA) constitute a mitochondrion transit peptide.

It belongs to the NAD kinase family. Homodimer.

Its subcellular location is the mitochondrion. It carries out the reaction NAD(+) + ATP = ADP + NADP(+) + H(+). Its function is as follows. Mitochondrial NAD(+) kinase that phosphorylates NAD(+) to yield NADP(+). Can use both ATP or inorganic polyphosphate as the phosphoryl donor. This is NAD kinase 2, mitochondrial (nadk2) from Xenopus tropicalis (Western clawed frog).